Here is a 370-residue protein sequence, read N- to C-terminus: Dual-specificity RNA methyltransferase RlmN (370 aa).

The active-site Proton acceptor is the glutamate 93. In terms of domain architecture, Radical SAM core spans 99–337 (EEGRGTLCVS…VTTVRKTRGD (239 aa)). The cysteines at positions 106 and 343 are disulfide-linked. Residues cysteine 113, cysteine 117, and cysteine 120 each contribute to the [4Fe-4S] cluster site. S-adenosyl-L-methionine contacts are provided by residues 167-168 (GE), serine 199, 221-223 (SLH), and asparagine 300. Cysteine 343 serves as the catalytic S-methylcysteine intermediate.

This sequence belongs to the radical SAM superfamily. RlmN family. [4Fe-4S] cluster is required as a cofactor.

It localises to the cytoplasm. It carries out the reaction adenosine(2503) in 23S rRNA + 2 reduced [2Fe-2S]-[ferredoxin] + 2 S-adenosyl-L-methionine = 2-methyladenosine(2503) in 23S rRNA + 5'-deoxyadenosine + L-methionine + 2 oxidized [2Fe-2S]-[ferredoxin] + S-adenosyl-L-homocysteine. The enzyme catalyses adenosine(37) in tRNA + 2 reduced [2Fe-2S]-[ferredoxin] + 2 S-adenosyl-L-methionine = 2-methyladenosine(37) in tRNA + 5'-deoxyadenosine + L-methionine + 2 oxidized [2Fe-2S]-[ferredoxin] + S-adenosyl-L-homocysteine. Functionally, specifically methylates position 2 of adenine 2503 in 23S rRNA and position 2 of adenine 37 in tRNAs. m2A2503 modification seems to play a crucial role in the proofreading step occurring at the peptidyl transferase center and thus would serve to optimize ribosomal fidelity. The sequence is that of Dual-specificity RNA methyltransferase RlmN from Francisella tularensis subsp. novicida (strain U112).